The sequence spans 109 residues: Putative RNase MJ1380 (109 aa).

Active-site residues include Arg76 and His81. An RX(4)HXY motif motif is present at residues 76-83 (RNILIHKY). The residue at position 83 (Tyr83) is an O-di-AMP-tyrosine.

It belongs to the HepT RNase toxin family. As to quaternary structure, homodimer, probably forms a complex with cognate antitoxin MJ1379. Modified by cognate antitoxin MJ1379; probably at least 2 successive AMPylation events occur on Tyr-83.

In terms of biological role, probable toxic component of a putative type VII toxin-antitoxin (TA) system, probably an RNase. Probably neutralized by cognate antitoxin MJ1379. Neutralization may be due to AMPylation by antitoxin MJ1379. The sequence is that of Putative RNase MJ1380 from Methanocaldococcus jannaschii (strain ATCC 43067 / DSM 2661 / JAL-1 / JCM 10045 / NBRC 100440) (Methanococcus jannaschii).